Consider the following 349-residue polypeptide: Anthranilate phosphoribosyltransferase (349 aa).

5-phospho-alpha-D-ribose 1-diphosphate is bound by residues Gly86, 89–90 (GD), Thr94, 96–99 (NIST), 114–122 (KHGNKSASG), and Ser126. An anthranilate-binding site is contributed by Gly86. Position 98 (Ser98) interacts with Mg(2+). Residue Asn117 participates in anthranilate binding. Residue Arg172 participates in anthranilate binding. 2 residues coordinate Mg(2+): Asp231 and Glu232.

The protein belongs to the anthranilate phosphoribosyltransferase family. Homodimer. The cofactor is Mg(2+).

It carries out the reaction N-(5-phospho-beta-D-ribosyl)anthranilate + diphosphate = 5-phospho-alpha-D-ribose 1-diphosphate + anthranilate. Its pathway is amino-acid biosynthesis; L-tryptophan biosynthesis; L-tryptophan from chorismate: step 2/5. In terms of biological role, catalyzes the transfer of the phosphoribosyl group of 5-phosphorylribose-1-pyrophosphate (PRPP) to anthranilate to yield N-(5'-phosphoribosyl)-anthranilate (PRA). This is Anthranilate phosphoribosyltransferase from Prochlorococcus marinus (strain MIT 9312).